The following is a 947-amino-acid chain: Vacuolar membrane protease (947 aa).

Topologically, residues 1–15 are cytoplasmic; sequence MRFKALLRAIFRFRK. The helical transmembrane segment at 16-36 threads the bilayer; the sequence is TNFSILLIITYAIIIALLVFD. Topologically, residues 37-358 are vacuolar; the sequence is RSRYKLDLPN…GLFFVVVDTK (322 aa). 4 N-linked (GlcNAc...) asparagine glycosylation sites follow: N46, N92, N108, and N121. Zn(2+) contacts are provided by H156 and D168. E200 (proton acceptor) is an active-site residue. The Zn(2+) site is built by E201, E226, and H300. N319 carries an N-linked (GlcNAc...) asparagine glycan. Residues 359–379 form a helical membrane-spanning segment; that stretch reads HLFYADIFMLIVGPILLMMKA. The Cytoplasmic portion of the chain corresponds to 380–391; sequence HLDKRRRLERSR. A helical transmembrane segment spans residues 392–412; sequence LVQLRLLLSLGLSVVFLLLLT. At 413-428 the chain is on the vacuolar side; the sequence is KSLNSFNPFVYSADYR. The helical transmembrane segment at 429 to 449 threads the bilayer; that stretch reads TPLTGLFLLFVTVNYLIVTLA. The Cytoplasmic portion of the chain corresponds to 450-458; the sequence is ERLNPTESY. A helical membrane pass occupies residues 459–479; it reads KTVAINQIFIIAWLMQLYITL. Residues 480 to 489 lie on the Vacuolar side of the membrane; it reads RMAKSDFTLT. Residues 490 to 510 form a helical membrane-spanning segment; that stretch reads GTYPLSIFSGCLIVALSLGLF. The Cytoplasmic portion of the chain corresponds to 511–601; the sequence is GTKNKAVNDA…DKNSDFSKHY (91 aa). Polar residues-rich tracts occupy residues 522 to 531 and 546 to 567; these read NSSVRYASSQ and NINQ…TDLH. Residues 522–573 are disordered; it reads NSSVRYASSQNDEDNPLPSQDRGENINQVRDTGNQEVTSNTNTDLHSNAEEV. A helical transmembrane segment spans residues 602-622; that stretch reads NWIVQFLCIVPISSFIFLFSL. The Vacuolar segment spans residues 623-641; the sequence is DYTLDAIHKMVQETTDDVQ. A helical transmembrane segment spans residues 642 to 662; that stretch reads LICIIITIGVILLALPILPFI. The Cytoplasmic portion of the chain corresponds to 663-669; sequence SKLNYQS. The helical transmembrane segment at 670–690 threads the bilayer; it reads SVIIAIIGVLLFGKSLVMQPF. Residues 691–947 lie on the Vacuolar side of the membrane; that stretch reads SEIAPLKVRF…LVVIKDKIQL (257 aa). Residues N742, N784, N801, and N833 are each glycosylated (N-linked (GlcNAc...) asparagine).

Belongs to the peptidase M28 family. Zn(2+) is required as a cofactor.

Its subcellular location is the vacuole membrane. Its function is as follows. May be involved in vacuolar sorting and osmoregulation. The sequence is that of Vacuolar membrane protease from Candida glabrata (strain ATCC 2001 / BCRC 20586 / JCM 3761 / NBRC 0622 / NRRL Y-65 / CBS 138) (Yeast).